The sequence spans 134 residues: Fluoride-specific ion channel FluC 3 (134 aa).

A run of 4 helical transmembrane segments spans residues 4–24 (LIILVFVGGAFGAMCREFIML), 35–55 (MDIFVANIIAAFLLGLTTSFF), 67–87 (MVGTGIMGGLSTFSSFVFGAV), and 100–120 (ICYLVASLIVGFIAVELGLMI). 2 residues coordinate Na(+): Gly-74 and Ser-77.

This sequence belongs to the fluoride channel Fluc/FEX (TC 1.A.43) family.

The protein resides in the cell inner membrane. It catalyses the reaction fluoride(in) = fluoride(out). Its activity is regulated as follows. Na(+) is not transported, but it plays an essential structural role and its presence is essential for fluoride channel function. In terms of biological role, fluoride-specific ion channel. Important for reducing fluoride concentration in the cell, thus reducing its toxicity. The protein is Fluoride-specific ion channel FluC 3 of Yersinia pseudotuberculosis serotype I (strain IP32953).